We begin with the raw amino-acid sequence, 518 residues long: Phosphoacetylglucosamine mutase 1 (518 aa).

At threonine 49 the chain carries Phosphothreonine. Catalysis depends on serine 51, which acts as the Phosphoserine intermediate. Mg(2+) is bound by residues serine 51, aspartate 267, aspartate 269, and aspartate 271. Position 51 is a phosphoserine (serine 51). Residues 360–362, 486–490, and arginine 495 each bind substrate; these read EAN and RASGT.

Belongs to the phosphohexose mutase family. Requires Mg(2+) as cofactor.

It is found in the cytoplasm. It localises to the nucleus. It catalyses the reaction N-acetyl-alpha-D-glucosamine 1-phosphate = N-acetyl-D-glucosamine 6-phosphate. It participates in nucleotide-sugar biosynthesis; UDP-N-acetyl-alpha-D-glucosamine biosynthesis; N-acetyl-alpha-D-glucosamine 1-phosphate from alpha-D-glucosamine 6-phosphate (route I): step 2/2. In terms of biological role, catalyzes the conversion of GlcNAc-6-P into GlcNAc-1-P during the synthesis of uridine diphosphate/UDP-GlcNAc, which is a biosynthetic precursor of chitin and also supplies the amino sugars for N-linked oligosaccharides of glycoproteins. The polypeptide is Phosphoacetylglucosamine mutase 1 (Schizosaccharomyces pombe (strain 972 / ATCC 24843) (Fission yeast)).